Reading from the N-terminus, the 368-residue chain is Forkhead box protein I2 (368 aa).

The interval Gln33–Tyr54 is disordered. The fork-head DNA-binding region spans Arg124 to Lys218. Residues Ser243–Gly272 are disordered. Positions Leu255–Glu264 are enriched in polar residues.

The protein localises to the nucleus. In terms of biological role, possible transcriptional activator. The polypeptide is Forkhead box protein I2 (Xenopus tropicalis (Western clawed frog)).